The chain runs to 414 residues: Probable 26S proteasome regulatory subunit 6B (414 aa).

202–209 (GPPGCGKT) lines the ATP pocket.

Belongs to the AAA ATPase family.

The protein localises to the cytoplasm. The protein resides in the nucleus. In terms of biological role, the 26S proteasome is involved in the ATP-dependent degradation of ubiquitinated proteins. The regulatory (or ATPase) complex confers ATP dependency and substrate specificity to the 26S complex. This Caenorhabditis elegans protein is Probable 26S proteasome regulatory subunit 6B (rpt-3).